The following is a 501-amino-acid chain: Glycerol kinase (501 aa).

An ADP-binding site is contributed by T14. The ATP site is built by T14, T15, and S16. Residue T14 coordinates sn-glycerol 3-phosphate. Residue R18 coordinates ADP. The sn-glycerol 3-phosphate site is built by R84, E85, Y135, and D244. The glycerol site is built by R84, E85, Y135, D244, and Q245. T266 and G309 together coordinate ADP. The ATP site is built by T266, G309, Q313, and G410. 2 residues coordinate ADP: G410 and N414.

Belongs to the FGGY kinase family.

The catalysed reaction is glycerol + ATP = sn-glycerol 3-phosphate + ADP + H(+). It participates in polyol metabolism; glycerol degradation via glycerol kinase pathway; sn-glycerol 3-phosphate from glycerol: step 1/1. With respect to regulation, inhibited by fructose 1,6-bisphosphate (FBP). In terms of biological role, key enzyme in the regulation of glycerol uptake and metabolism. Catalyzes the phosphorylation of glycerol to yield sn-glycerol 3-phosphate. In Deinococcus radiodurans (strain ATCC 13939 / DSM 20539 / JCM 16871 / CCUG 27074 / LMG 4051 / NBRC 15346 / NCIMB 9279 / VKM B-1422 / R1), this protein is Glycerol kinase.